A 274-amino-acid polypeptide reads, in one-letter code: Large ribosomal subunit protein uL2 (274 aa).

The interval valine 220 to threonine 259 is disordered. The span at proline 227 to alanine 239 shows a compositional bias: basic and acidic residues. A compositionally biased stretch (basic residues) spans lysine 249 to threonine 259.

Belongs to the universal ribosomal protein uL2 family. In terms of assembly, part of the 50S ribosomal subunit. Forms a bridge to the 30S subunit in the 70S ribosome.

Its function is as follows. One of the primary rRNA binding proteins. Required for association of the 30S and 50S subunits to form the 70S ribosome, for tRNA binding and peptide bond formation. It has been suggested to have peptidyltransferase activity; this is somewhat controversial. Makes several contacts with the 16S rRNA in the 70S ribosome. This is Large ribosomal subunit protein uL2 from Chloroflexus aggregans (strain MD-66 / DSM 9485).